Reading from the N-terminus, the 645-residue chain is Threonine--tRNA ligase (645 aa).

The TGS domain maps to 1–63 (MDQIKIKFPD…ESDGDIEIVT (63 aa)). Residues 242-540 (DHRKIGKELE…LTEETKGAFP (299 aa)) are catalytic. Residues C336, H387, and H517 each contribute to the Zn(2+) site.

The protein belongs to the class-II aminoacyl-tRNA synthetase family. As to quaternary structure, homodimer. Zn(2+) serves as cofactor.

It localises to the cytoplasm. The catalysed reaction is tRNA(Thr) + L-threonine + ATP = L-threonyl-tRNA(Thr) + AMP + diphosphate + H(+). Catalyzes the attachment of threonine to tRNA(Thr) in a two-step reaction: L-threonine is first activated by ATP to form Thr-AMP and then transferred to the acceptor end of tRNA(Thr). Also edits incorrectly charged L-seryl-tRNA(Thr). This is Threonine--tRNA ligase from Staphylococcus saprophyticus subsp. saprophyticus (strain ATCC 15305 / DSM 20229 / NCIMB 8711 / NCTC 7292 / S-41).